Consider the following 397-residue polypeptide: MDRCKENCVSRPVKSTVPFGPKRVLVTEQIPSQHPGSASSGQAQRVLCPSNSQRVPPQAQKPVAGQKPVLKQLPAASGPRPASRLSNPQKSEQPQPAASGNNSEKEQTSIQKTEDSKKRQWTLEDFDIGRPLGKGKFGNVYLAREKQSKFILALKVLFKVQLEKAGVEHQLRREVEIQSHLRHPNILRLYGYFHDATRVYLILEYAPLGTVYRELQKLSKFDEQRTATYITELANALSYCHSKRVIHRDIKPENLLLGSNGELKIADFGWSVHAPSSRRTTLCGTLDYQPPEMIEGRMHDEKVDLWSLGVLCYEFLVGMPPFEAHTYQETYRRISRVEFTFPDFVTEGARDLISRLLKHNSSQRLTLAEVLEHPWIKANSSKPPTGHNSKEATSKSS.

The tract at residues 1 to 118 (MDRCKENCVS…SIQKTEDSKK (118 aa)) is disordered. Composition is skewed to polar residues over residues 29–55 (QIPS…SQRV) and 84–102 (RLSN…SGNN). Phosphoserine occurs at positions 40 and 50. The span at 103–118 (SEKEQTSIQKTEDSKK) shows a compositional bias: basic and acidic residues. The Protein kinase domain maps to 126-376 (FDIGRPLGKG…LAEVLEHPWI (251 aa)). Residues Lys136, Lys155, and 203–206 (LEYA) each bind ATP. Asp249 functions as the Proton acceptor in the catalytic mechanism. Residue Lys251 forms a Glycyl lysine isopeptide (Lys-Gly) (interchain with G-Cter in SUMO2) linkage. ATP-binding positions include 253-254 (EN) and Asp267. Positions 273-286 (HAPSSRRTTLCGTL) are activation segment. Thr280 and Thr281 each carry phosphothreonine. Ser335 carries the post-translational modification Phosphoserine; by PKA and PAK. A compositionally biased stretch (polar residues) spans 378–387 (ANSSKPPTGH). Positions 378 to 397 (ANSSKPPTGHNSKEATSKSS) are disordered. The span at 388–397 (NSKEATSKSS) shows a compositional bias: basic and acidic residues.

Belongs to the protein kinase superfamily. Ser/Thr protein kinase family. Aurora subfamily. As to quaternary structure, part of a complex composed of NEDD9, AURKA and CTTN; within the complex NEDD9 acts as a scaffold protein and is required for complex formation. Identified in a complex with AUNIP and NIN. Interacts with CPEB1, JTB, TACC1, TPX2, PPP2CA, as well as with the protein phosphatase type 1 (PP1) isoforms PPP1CA, PPP1CB and PPP1CC. Also interacts with its substrates ARHGEF2, BORA, KIF2A, PARD3, and p53/TP53. Interaction with BORA promotes phosphorylation of PLK1. Interacts with FBXL7 and CIMAP3. Interacts with GADD45A, competing with its oligomerization. Interacts (via C-terminus) with AUNIP (via C-terminus). Interacts with SIRT2. Interacts with FRY; this interaction facilitates AURKA-mediated PLK1 phosphorylation. Interacts with MYCN; interaction is phospho-independent and triggers AURKA activation; AURKA competes with FBXW7 for binding to unphosphorylated MYCN but not for binding to phosphorylated MYCN. Interacts with HNRNPU. Interacts with AAAS. Interacts with KLHL18 and CUL3. Interacts with FOXP1. Interacts with HDAC6; AURKA-mediated phosphorylation of HDAC6 promotes deacetylation of alpha-tubulin. Activated by phosphorylation at Thr-281; this brings about a change in the conformation of the activation segment. Phosphorylation at Thr-281 varies during the cell cycle and is highest during M phase. Autophosphorylated at Thr-281 upon TPX2 binding. Thr-281 can be phosphorylated by several kinases, including PAK and PKA. Protein phosphatase type 1 (PP1) binds AURKA and inhibits its activity by dephosphorylating Thr-281 during mitosis. Phosphorylation at Ser-335 decreases the kinase activity. PPP2CA controls degradation by dephosphorylating Ser-52 at the end of mitosis. Phosphorylated in embryonic brain neurons. Post-translationally, ubiquitinated by CHFR, leading to its degradation by the proteasome. Ubiquitinated by the anaphase-promoting complex (APC), leading to its degradation by the proteasome. Ubiquitinated by the E3 ubiquitin-protein ligase complex SCF(FBXL7) during mitosis, leading to its degradation by the proteasome. Ubiquitinated by the CUL3-KLHL18 ligase leading to its activation at the centrosome which is required for initiating mitotic entry. Ubiquitination mediated by CUL3-KLHL18 ligase does not lead to its degradation by the proteasome. In terms of tissue distribution, detected in neurons in brain cortex and hippocampus (at protein level). Expressed in mammary gland and tumor.

The protein resides in the cytoplasm. The protein localises to the cytoskeleton. Its subcellular location is the microtubule organizing center. It localises to the centrosome. It is found in the spindle pole. The protein resides in the centriole. The protein localises to the cell projection. Its subcellular location is the neuron projection. It localises to the cilium. It is found in the cilium basal body. The protein resides in the basolateral cell membrane. It catalyses the reaction L-seryl-[protein] + ATP = O-phospho-L-seryl-[protein] + ADP + H(+). The enzyme catalyses L-threonyl-[protein] + ATP = O-phospho-L-threonyl-[protein] + ADP + H(+). With respect to regulation, activation of CDK1, appears to be an upstream event of AURKA activation. Phosphatase inhibitor-2 (PPP1R2) and TPX2 act also as activators. Inactivated by the G2 checkpoint. Inhibited by GADD45A and p53/TP53, and through dephosphorylation by protein phosphatase type 1 (PP1). MLN8054 is also a potent and selective inhibitor. Activated during the early phase of cilia disassembly in the presence of FBXL7 and CIMAP3. Inhibited by the small molecule inhibitor VX-680. Its function is as follows. Mitotic serine/threonine kinase that contributes to the regulation of cell cycle progression. Associates with the centrosome and the spindle microtubules during mitosis and plays a critical role in various mitotic events including the establishment of mitotic spindle, centrosome duplication, centrosome separation as well as maturation, chromosomal alignment, spindle assembly checkpoint, and cytokinesis. Required for normal spindle positioning during mitosis and for the localization of NUMA1 and DCTN1 to the cell cortex during metaphase. Required for initial activation of CDK1 at centrosomes. Phosphorylates numerous target proteins, including ARHGEF2, BORA, BRCA1, CDC25B, DLGP5, HDAC6, KIF2A, LATS2, NDEL1, PARD3, PPP1R2, PLK1, RASSF1, TACC3, p53/TP53 and TPX2. Phosphorylates MCRS1 which is required for MCRS1-mediated kinetochore fiber assembly and mitotic progression. Regulates KIF2A tubulin depolymerase activity. Required for normal axon formation. Plays a role in microtubule remodeling during neurite extension. Important for microtubule formation and/or stabilization. Also acts as a key regulatory component of the p53/TP53 pathway, and particularly the checkpoint-response pathways critical for oncogenic transformation of cells, by phosphorylating and stabilizating p53/TP53. Phosphorylates its own inhibitors, the protein phosphatase type 1 (PP1) isoforms, to inhibit their activity. Inhibits cilia outgrowth. Required for cilia disassembly via phosphorylation of HDAC6 and subsequent deacetylation of alpha-tubulin. Regulates protein levels of the anti-apoptosis protein BIRC5 by suppressing the expression of the SCF(FBXL7) E3 ubiquitin-protein ligase substrate adapter FBXL7 through the phosphorylation of the transcription factor FOXP1. The sequence is that of Aurora kinase A from Rattus norvegicus (Rat).